Consider the following 273-residue polypeptide: DNA repair protein RecO (273 aa).

Positions 250-273 are disordered; that stretch reads NVGQNPSGKDDLNERRDVDGTGES. The span at 257 to 273 shows a compositional bias: basic and acidic residues; sequence GKDDLNERRDVDGTGES.

Belongs to the RecO family.

Involved in DNA repair and RecF pathway recombination. This is DNA repair protein RecO from Desulfitobacterium hafniense (strain Y51).